Reading from the N-terminus, the 862-residue chain is Leucine--tRNA ligase (862 aa).

The 'HIGH' region signature appears at 51-61 (PYPSGSLHMGH). The 'KMSKS' region signature appears at 624–628 (KMSKS). K627 is a binding site for ATP.

It belongs to the class-I aminoacyl-tRNA synthetase family.

It is found in the cytoplasm. It catalyses the reaction tRNA(Leu) + L-leucine + ATP = L-leucyl-tRNA(Leu) + AMP + diphosphate. The sequence is that of Leucine--tRNA ligase from Prochlorococcus marinus (strain NATL1A).